A 311-amino-acid chain; its full sequence is MMKRLSSSDSVGGLISLCPTTSTDEQSPRRYGGREFQSMLEGYEEEEEAIVEERGHVGLSEKKRRLSINQVKALEKNFELENKLEPERKVKLAQELGLQPRQVAVWFQNRRARWKTKQLEKDYGVLKTQYDSLRHNFDSLRRDNESLLQEISKLKTKLNGGGGEEEEEENNAAVTTESDISVKEEEVSLPEKITEAPSSPPQFLEHSDGLNYRSFTDLRDLLPLKAAASSFAAAAGSSDSSDSSALLNEESSSNVTVAAPVTVPGGNFFQFVKMEQTEDHEDFLSGEEACEFFSDEQPPSLHWYSTVDHWN.

Polar residues predominate over residues 1–10 (MMKRLSSSDS). The segment at 1-32 (MMKRLSSSDSVGGLISLCPTTSTDEQSPRRYG) is disordered. The interval 1–43 (MMKRLSSSDSVGGLISLCPTTSTDEQSPRRYGGREFQSMLEGY) is interaction with ABI1. The segment at residues 59–118 (LSEKKRRLSINQVKALEKNFELENKLEPERKVKLAQELGLQPRQVAVWFQNRRARWKTKQ) is a DNA-binding region (homeobox). Positions 119–154 (LEKDYGVLKTQYDSLRHNFDSLRRDNESLLQEISKL) are leucine-zipper. Residues 157 to 183 (KLNGGGGEEEEEENNAAVTTESDISVK) are disordered. The interval 218–311 (LRDLLPLKAA…HWYSTVDHWN (94 aa)) is interaction with ABI1.

The protein belongs to the HD-ZIP homeobox family. Class I subfamily. Interacts with ABI1. In terms of processing, phosphorylated by PKA. Reversible inactivation of the binding to DNA by phosphorylation. Widely expressed.

It is found in the nucleus. Functionally, transcription activator that may act as growth regulators in response to water deficit. Interacts with the core sequence 5'-CAATTATTA-3' of promoters in response to ABA and in an ABI1-dependent manner. Involved in the negative regulation of the ABA signaling pathway. The protein is Homeobox-leucine zipper protein ATHB-6 (ATHB-6) of Arabidopsis thaliana (Mouse-ear cress).